The following is a 241-amino-acid chain: High mobility group B protein 7 (241 aa).

Composition is skewed to polar residues over residues 1-11 (MAGPSTTSNAP) and 20-29 (ETSSNTSTTL). 3 disordered regions span residues 1–30 (MAGP…TTLR), 75–116 (TQAE…NKPK), and 174–241 (EYNK…LDDY). The segment covering 77 to 90 (AEAKKKPAEKKKTT) has biased composition (basic and acidic residues). A DNA-binding region (HMG box) is located at residues 115-183 (PKRPLTAFFI…EYNKSLESND (69 aa)). Composition is skewed to acidic residues over residues 182–221 (NDAD…ENTD) and 229–241 (GKEE…LDDY).

The protein belongs to the HMGB family. In terms of processing, phosphorylated. As to expression, expressed at low levels in lateral roots, root tips, cotyledons, leaves and flowers (including pedicels, but excluding styles).

Its subcellular location is the nucleus. Its function is as follows. Binds preferentially double-stranded supercoiled DNA. Required for karyogamy during female gametophyte development, when the two polar nuclei fuse to form the diploid central cell nucleus. The protein is High mobility group B protein 7 (HMGB7) of Arabidopsis thaliana (Mouse-ear cress).